A 1035-amino-acid polypeptide reads, in one-letter code: GRB10-interacting GYF protein 1 (1035 aa).

Phosphoserine is present on residues Ser24, Ser28, Ser137, and Ser157. Positions 105–422 (KGAGPPLAGT…AGPPGDLEDD (318 aa)) are disordered. Basic and acidic residues-rich tracts occupy residues 148 to 179 (SPRE…RCGF) and 186 to 203 (PRKE…SLRE). Ser230 carries the phosphoserine modification. The span at 239–267 (GWREHGERRRKFEFDLRGDRGGCGEEEGR) shows a compositional bias: basic and acidic residues. 2 stretches are compositionally biased toward acidic residues: residues 295-304 (CLDDEDEEMG) and 324-349 (PEEQ…EEGP). Ser341 bears the Phosphoserine mark. Over residues 367-378 (SSPSPLPTLGPL) the composition is skewed to low complexity. The segment covering 388-401 (TAEKEPPAAEDDIR) has biased composition (basic and acidic residues). Position 406 is a phosphoserine (Ser406). The segment covering 406–417 (SPGVGSSAGPPG) has biased composition (low complexity). A GYF domain is found at 474–522 (ARKWFYKDPQGEIQGPFTTQEMAEWFQAGYFSMSLLVKRGCDEGFQPLG). Phosphoserine is present on residues Ser538 and Ser638. 3 disordered regions span residues 621–640 (PPRG…LSVP), 696–724 (KREE…QEEE), and 825–879 (WGGP…RPIR). Over residues 629-639 (LLPTMSRSLSV) the composition is skewed to polar residues. Basic and acidic residues predominate over residues 696–722 (KREEEERKRREEKRRQQQQEEQKRRQE). The segment covering 857–874 (LKNSRSSPSLSDSYSHLS) has biased composition (low complexity). At Ser862 the chain carries Phosphoserine.

Belongs to the GIGYF family. As to quaternary structure, interacts with GRB10. This transient binding is increased under IGF1 stimulation and leads to recruitment of GIGYF1/GRB10 complex to IGF1 receptor. Interacts with DDX6.

In terms of biological role, may act cooperatively with GRB10 to regulate tyrosine kinase receptor signaling. May increase IGF1 receptor phosphorylation under IGF1 stimulation as well as phosphorylation of IRS1 and SHC1. This Homo sapiens (Human) protein is GRB10-interacting GYF protein 1 (GIGYF1).